A 174-amino-acid chain; its full sequence is Peptide deformylase (174 aa).

Fe cation contacts are provided by Cys-96 and His-138. Glu-139 is an active-site residue. His-142 contacts Fe cation.

It belongs to the polypeptide deformylase family. The cofactor is Fe(2+).

The enzyme catalyses N-terminal N-formyl-L-methionyl-[peptide] + H2O = N-terminal L-methionyl-[peptide] + formate. Removes the formyl group from the N-terminal Met of newly synthesized proteins. Requires at least a dipeptide for an efficient rate of reaction. N-terminal L-methionine is a prerequisite for activity but the enzyme has broad specificity at other positions. This is Peptide deformylase from Nautilia profundicola (strain ATCC BAA-1463 / DSM 18972 / AmH).